A 374-amino-acid chain; its full sequence is Chaperone protein DnaJ (374 aa).

Residues 5 to 70 (DYYEVLGVAK…QKRAAYDRYG (66 aa)) form the J domain. A CR-type zinc finger spans residues 134 to 212 (GFDTEIRVPS…CDGVGRIRRN (79 aa)). Zn(2+)-binding residues include cysteine 147, cysteine 150, cysteine 164, cysteine 167, cysteine 186, cysteine 189, cysteine 200, and cysteine 203. CXXCXGXG motif repeat units follow at residues 147–154 (CDTCHGSG), 164–171 (CRTCGGSG), 186–193 (CPTCHGTG), and 200–207 (CPSCDGVG).

It belongs to the DnaJ family. In terms of assembly, homodimer. Requires Zn(2+) as cofactor.

It localises to the cytoplasm. Its function is as follows. Participates actively in the response to hyperosmotic and heat shock by preventing the aggregation of stress-denatured proteins and by disaggregating proteins, also in an autonomous, DnaK-independent fashion. Unfolded proteins bind initially to DnaJ; upon interaction with the DnaJ-bound protein, DnaK hydrolyzes its bound ATP, resulting in the formation of a stable complex. GrpE releases ADP from DnaK; ATP binding to DnaK triggers the release of the substrate protein, thus completing the reaction cycle. Several rounds of ATP-dependent interactions between DnaJ, DnaK and GrpE are required for fully efficient folding. Also involved, together with DnaK and GrpE, in the DNA replication of plasmids through activation of initiation proteins. This chain is Chaperone protein DnaJ, found in Bordetella petrii (strain ATCC BAA-461 / DSM 12804 / CCUG 43448).